The sequence spans 1083 residues: MSQTQDYECRSHNVDLPESRIPGSNTRLEWVEIIEPRTRERMYANLVTGECVWDPPAGVRIKRTSENQWWELFDPNTSRFYYYNASTQRTVWHRPQGCDIIPLAKLQTLKQNTESPRASAESSPGRGSSVSREGSTSSSLEPEPDTEKAQELPARAGRPAAFGTVKEDSGSSSPPGVFLEKDYEIYRDYSADGQLLHYRTSSLRWNSGAKERMLIKVADREPSFLAAQGNGYAPDGPPGVRSRRPSGSQHSPSLQTFAPEADGTIFFPERRPSPFLKRAELPGSSSPLLAQPRKPSGDSQPSSPRYGYEPPLYEEPPVEYQAPIYDEPPMDVQFEAGGGYQAGSPQRSPGRKPRPFLQPNKQGPPSPCQQLVLTKQKCPERFLSLEYSPAGKEYVRQLVYVEQAGSSPKLRAGPRHKYAPNPGGGSYSLQPSPCLLRDQRLGVKSGDYSTMEGPELRHSQPPTPLPQAQEDAMSWSSQQDTLSSTGYSPGTRKRKSRKPSLCQATSATPTEGPGDLLVEQPLAEEQPPCGTSLAPVKRAEGEAEGARGAAEPFLAQARLAWEAQQAHFHMKQRSSWDSQQDGSGYESDGALPLPMPGPVVRAFSEDEALAQQENRHWRRGTFEKLGFPQILLEKSVSVQTNLASPEPYLHPSQSEDLAACAQFESSRQSRSGVPSSSCVFPTFTLRKPSSETDIENWASKHFNKHTQGLFRRKVSIANMLAWSSESIKKPMIVTSDRHVKKEACELFKLIQMYMGDRRAKADPLHVALEVATKGWSVQGLRDELYIQLCRQTTENFRLESLARGWELMAICLAFFPPTPKFHSYLEGYIYRHMDPVNDTKGVAISTYAKYCYHKLQKAALTGAKKGLKKPNVEEIRHAKNAVFSPSMFGSALQEVMGMQRERYPERQLPWVQTRLSEEVLALNGDQTEGIFRVPGDIDEVNALKLQVDQWKVPTGLEDPHVPASLLKLWYRELEEPLIPHEFYEQCIAHYDSPEAAVAVVHALPRINRMVLCYLIRFLQVFVQPANVAVTKMDVSNLAMVMAPNCLRCQSDDPRVIFENTRKEMSFLRVLIQHLDTSFMEGVL.

Ser2 is subject to N-acetylserine. WW domains lie at 25–58 (NTRLEWVEIIEPRTRERMYANLVTGECVWDPPAG) and 63–97 (RTSENQWWELFDPNTSRFYYYNASTQRTVWHRPQG). Positions 110-154 (KQNTESPRASAESSPGRGSSVSREGSTSSSLEPEPDTEKAQELPA) are disordered. Low complexity predominate over residues 117 to 141 (RASAESSPGRGSSVSREGSTSSSLE). Ser169 is subject to Phosphoserine. The interval 226 to 369 (AAQGNGYAPD…NKQGPPSPCQ (144 aa)) is disordered. A compositionally biased stretch (polar residues) spans 245-256 (PSGSQHSPSLQT). Positions 268-280 (PERRPSPFLKRAE) are enriched in basic and acidic residues. 5 positions are modified to phosphoserine: Ser286, Ser384, Ser388, Ser406, and Ser407. Disordered stretches follow at residues 405-545 (GSSP…EAEG) and 570-599 (MKQRSSWDSQQDGSGYESDGALPLPMPGPV). Composition is skewed to polar residues over residues 474 to 488 (SWSSQQDTLSSTGYS) and 573 to 582 (RSSWDSQQDG). 4 positions are modified to phosphoserine: Ser604, Ser690, Ser715, and Ser726. In terms of domain architecture, MyTH4 spans 722 to 879 (WSSESIKKPM…PNVEEIRHAK (158 aa)). Residues 890–1078 (SALQEVMGMQ…VLIQHLDTSF (189 aa)) enclose the Rho-GAP domain.

The protein localises to the nucleus. The protein is Rho GTPase-activating protein 39 (ARHGAP39) of Homo sapiens (Human).